The chain runs to 500 residues: L-arabinose isomerase (500 aa).

Mn(2+) contacts are provided by Glu306, Glu333, His349, and His448.

Belongs to the arabinose isomerase family. Requires Mn(2+) as cofactor.

The enzyme catalyses beta-L-arabinopyranose = L-ribulose. The protein operates within carbohydrate degradation; L-arabinose degradation via L-ribulose; D-xylulose 5-phosphate from L-arabinose (bacterial route): step 1/3. In terms of biological role, catalyzes the conversion of L-arabinose to L-ribulose. The protein is L-arabinose isomerase of Shewanella baltica (strain OS223).